Reading from the N-terminus, the 1031-residue chain is GTPase-activating protein DDB_G0291510 (1031 aa).

Positions 18 to 48 (VEKGDIDENNSGSINNRPLSPTLFSSNSSNN) are disordered. Over residues 26-41 (NNSGSINNRPLSPTLF) the composition is skewed to polar residues. The 219-residue stretch at 186–404 (FKDLEQTQTE…RTFKDQLESI (219 aa)) folds into the Rap-GAP domain. Residues 471-881 (NEKINCLDVV…LSNDDCNLDN (411 aa)) form the CNH domain. Positions 920 to 950 (NNNYNNNGNNSNGGNNNNNNNNNNGCNNSLI) are disordered.

This is GTPase-activating protein DDB_G0291510 from Dictyostelium discoideum (Social amoeba).